The sequence spans 417 residues: Phosphoglycerate kinase (417 aa).

The (2R)-3-phosphoglycerate site is built by valine 23, aspartate 24, phenylalanine 25, asparagine 26, glutamine 38, arginine 39, serine 62, histidine 63, glycine 65, arginine 66, leucine 121, arginine 122, histidine 169, and arginine 170. Residue glycine 213 participates in ADP binding. Residue glycine 213 coordinates CDP. Residues alanine 214 and lysine 215 each coordinate AMP. An ATP-binding site is contributed by alanine 214. Alanine 214 is a binding site for Mg(2+). Position 218 (aspartate 218) interacts with CDP. Aspartate 218 is a Mg(2+) binding site. Lysine 219 serves as a coordination point for AMP. ATP is bound at residue lysine 219. Glycine 237 lines the ADP pocket. Residue glycine 237 coordinates CDP. 2 residues coordinate AMP: glycine 238 and glycine 312. ATP contacts are provided by glycine 238 and glycine 312. Glycine 337 and phenylalanine 342 together coordinate CDP. An ADP-binding site is contributed by phenylalanine 342. AMP is bound at residue glutamate 343. Positions 343, 374, and 375 each coordinate ATP. Aspartate 374 contributes to the Mg(2+) binding site.

Belongs to the phosphoglycerate kinase family. Monomer. Mg(2+) is required as a cofactor.

It localises to the cytoplasm. It is found in the mitochondrion. The enzyme catalyses (2R)-3-phosphoglycerate + ATP = (2R)-3-phospho-glyceroyl phosphate + ADP. It participates in carbohydrate degradation; glycolysis; pyruvate from D-glyceraldehyde 3-phosphate: step 2/5. Catalyzes one of the two ATP producing reactions in the glycolytic pathway via the reversible conversion of 1,3-diphosphoglycerate to 3-phosphoglycerate. Both L- and D- forms of purine and pyrimidine nucleotides can be used as substrates, but the activity is much lower on pyrimidines. Negatively regulates the biosynthesis of acetyl-CoA from pyruvate in the mitochondrion. In Candida maltosa (Yeast), this protein is Phosphoglycerate kinase (PGK1).